A 181-amino-acid polypeptide reads, in one-letter code: Secreted chorismate mutase (181 aa).

A signal peptide spans 1-20 (MLASVALAALAGVGTPHATA). The Chorismate mutase domain occupies 21–100 (DDASPLVPLV…ATSSVEHTRF (80 aa)). Residues Arg36, Lys47, Asp56, 59–63 (REQQV), 92–96 (TSSVE), and Arg121 contribute to the substrate site. Cys147 and Cys180 are oxidised to a cystine.

Homodimer.

It is found in the secreted. It catalyses the reaction chorismate = prephenate. It participates in metabolic intermediate biosynthesis; prephenate biosynthesis; prephenate from chorismate: step 1/1. Catalyzes the Claisen rearrangement of chorismate to prephenate. May play some role in the pathogenicity. The polypeptide is Secreted chorismate mutase (Mycolicibacterium smegmatis (strain ATCC 700084 / mc(2)155) (Mycobacterium smegmatis)).